A 167-amino-acid polypeptide reads, in one-letter code: Peptide deformylase (167 aa).

Fe cation contacts are provided by C91 and H133. Residue E134 is part of the active site. H137 contributes to the Fe cation binding site.

Belongs to the polypeptide deformylase family. Fe(2+) is required as a cofactor.

It carries out the reaction N-terminal N-formyl-L-methionyl-[peptide] + H2O = N-terminal L-methionyl-[peptide] + formate. In terms of biological role, removes the formyl group from the N-terminal Met of newly synthesized proteins. Requires at least a dipeptide for an efficient rate of reaction. N-terminal L-methionine is a prerequisite for activity but the enzyme has broad specificity at other positions. The polypeptide is Peptide deformylase (Chromobacterium violaceum (strain ATCC 12472 / DSM 30191 / JCM 1249 / CCUG 213 / NBRC 12614 / NCIMB 9131 / NCTC 9757 / MK)).